The chain runs to 87 residues: Elongation factor Ts, chloroplastic (87 aa).

This sequence belongs to the EF-Ts family.

The protein resides in the plastid. The protein localises to the chloroplast. Its function is as follows. Associates with the EF-Tu.GDP complex and induces the exchange of GDP to GTP. It remains bound to the aminoacyl-tRNA.EF-Tu.GTP complex up to the GTP hydrolysis stage on the ribosome. This Antithamnion sp. (Red alga) protein is Elongation factor Ts, chloroplastic (tsf).